Consider the following 338-residue polypeptide: MKAPFTSLAGFRAVFETLPQVDAEAVEAATARNETLTKPKGALGRLEELAIWYAGWIGDGRPALERPQVAIFAGNHGIAARGVSAFPPEVTVQMVANYRAGGAAVNQLCHVAGASMTVTELELDRPTLDFTVSPAMTEDELVAALAAGWEAVDDESDLLVVGEMGIGNTTAAAAIAAALFGGTAAEWTGRGSGVAGSALEAKTRVVAEGLERHADALSDPLEVLRCLGGREIAAMAGAIARARVGRTPVILDGFICTSAAAVLHALTPSALDHAIAGHVSAEGAHPAALARIGKEPLLDLGMRLGEGTGAIVAINILRSAVACLSGMATFAEAGVSGG.

The active-site Proton acceptor is the E306.

Belongs to the CobT family.

The catalysed reaction is 5,6-dimethylbenzimidazole + nicotinate beta-D-ribonucleotide = alpha-ribazole 5'-phosphate + nicotinate + H(+). Its pathway is nucleoside biosynthesis; alpha-ribazole biosynthesis; alpha-ribazole from 5,6-dimethylbenzimidazole: step 1/2. Catalyzes the synthesis of alpha-ribazole-5'-phosphate from nicotinate mononucleotide (NAMN) and 5,6-dimethylbenzimidazole (DMB). The protein is Nicotinate-nucleotide--dimethylbenzimidazole phosphoribosyltransferase of Cereibacter sphaeroides (strain ATCC 17023 / DSM 158 / JCM 6121 / CCUG 31486 / LMG 2827 / NBRC 12203 / NCIMB 8253 / ATH 2.4.1.) (Rhodobacter sphaeroides).